The following is a 118-amino-acid chain: V-type proton ATPase subunit G 3 (118 aa).

Residues 1 to 12 show a composition bias toward polar residues; it reads MASQSQGIQQLL. Residues 1–37 form a disordered region; the sequence is MASQSQGIQQLLQAEKRAKDKLEEAKKRKNKRLRQAK. Residues 3–53 adopt a coiled-coil conformation; sequence SQSQGIQQLLQAEKRAKDKLEEAKKRKNKRLRQAKEEATADIDQYRLKREG. Basic and acidic residues predominate over residues 14-26; it reads AEKRAKDKLEEAK.

This sequence belongs to the V-ATPase G subunit family. In terms of assembly, V-ATPase is a heteromultimeric enzyme made up of two complexes: the ATP-hydrolytic V1 complex and the proton translocation V0 complex. The V1 complex consists of three catalytic AB heterodimers that form a heterohexamer, three peripheral stalks each consisting of EG heterodimers, one central rotor including subunits D and F, and the regulatory subunits C and H. The proton translocation complex V0 consists of the proton transport subunit a, a ring of proteolipid subunits c9c'', rotary subunit d, subunits e and f, and two accessory subunits.

Subunit of the V1 complex of vacuolar(H+)-ATPase (V-ATPase), a multisubunit enzyme composed of a peripheral complex (V1) that hydrolyzes ATP and a membrane integral complex (V0) that translocates protons. V-ATPase is responsible for acidifying and maintaining the pH of intracellular compartments and in some cell types, is targeted to the plasma membrane, where it is responsible for acidifying the extracellular environment. The polypeptide is V-type proton ATPase subunit G 3 (atp6v1g3) (Xenopus tropicalis (Western clawed frog)).